A 338-amino-acid chain; its full sequence is MEKQTVAVLGPGSWGTALSQVLNDNGHEVRIWGNLPEQINEINTHHTNKHYFKDVVLDENIIAYTDLAETLKNVDAILFVVPTKVTRLVAQQVAQTLDHKVIIMHASKGLEPDSHKRLSTILEEEIPEHLRSDIVVVSGPSHAEETIVRDLTLITAASKDLQTAQYVQELFSNHYFRLYTNTDVIGVETAGALKNIIAVGAGALHGLGFGDNAKAAIIARGLAEITRLGVALGASPLTYSGLSGVGDLIVTGTSIHSRNWRAGDALGRGESLADIEANMGMVIEGISTTRAAYELAQELGVYMPITQAIYQVIYHGTNIKDAIYDIMNNEFKAENEWS.

3 residues coordinate NADPH: Ser-13, Trp-14, and Lys-108. 3 residues coordinate sn-glycerol 3-phosphate: Lys-108, Gly-139, and Ser-141. An NADPH-binding site is contributed by Ala-143. The sn-glycerol 3-phosphate site is built by Lys-194, Asp-247, Ser-257, Arg-258, and Asn-259. Lys-194 (proton acceptor) is an active-site residue. Arg-258 is a binding site for NADPH. Residues Val-282 and Glu-284 each contribute to the NADPH site.

Belongs to the NAD-dependent glycerol-3-phosphate dehydrogenase family.

It localises to the cytoplasm. It catalyses the reaction sn-glycerol 3-phosphate + NAD(+) = dihydroxyacetone phosphate + NADH + H(+). The catalysed reaction is sn-glycerol 3-phosphate + NADP(+) = dihydroxyacetone phosphate + NADPH + H(+). It participates in membrane lipid metabolism; glycerophospholipid metabolism. Catalyzes the reduction of the glycolytic intermediate dihydroxyacetone phosphate (DHAP) to sn-glycerol 3-phosphate (G3P), the key precursor for phospholipid synthesis. The protein is Glycerol-3-phosphate dehydrogenase [NAD(P)+] of Streptococcus pneumoniae (strain JJA).